Here is a 222-residue protein sequence, read N- to C-terminus: GTP cyclohydrolase 1 (222 aa).

Zn(2+) is bound by residues Cys111, His114, and Cys182.

Belongs to the GTP cyclohydrolase I family. In terms of assembly, homomer.

The enzyme catalyses GTP + H2O = 7,8-dihydroneopterin 3'-triphosphate + formate + H(+). It functions in the pathway cofactor biosynthesis; 7,8-dihydroneopterin triphosphate biosynthesis; 7,8-dihydroneopterin triphosphate from GTP: step 1/1. The chain is GTP cyclohydrolase 1 from Klebsiella pneumoniae (strain 342).